Consider the following 377-residue polypeptide: 4-hydroxy-3-methylbut-2-en-1-yl diphosphate synthase (flavodoxin) (377 aa).

4 residues coordinate [4Fe-4S] cluster: Cys272, Cys275, Cys307, and Glu314.

Belongs to the IspG family. The cofactor is [4Fe-4S] cluster.

The enzyme catalyses (2E)-4-hydroxy-3-methylbut-2-enyl diphosphate + oxidized [flavodoxin] + H2O + 2 H(+) = 2-C-methyl-D-erythritol 2,4-cyclic diphosphate + reduced [flavodoxin]. It functions in the pathway isoprenoid biosynthesis; isopentenyl diphosphate biosynthesis via DXP pathway; isopentenyl diphosphate from 1-deoxy-D-xylulose 5-phosphate: step 5/6. Converts 2C-methyl-D-erythritol 2,4-cyclodiphosphate (ME-2,4cPP) into 1-hydroxy-2-methyl-2-(E)-butenyl 4-diphosphate. In Zymomonas mobilis subsp. mobilis (strain ATCC 31821 / ZM4 / CP4), this protein is 4-hydroxy-3-methylbut-2-en-1-yl diphosphate synthase (flavodoxin).